The primary structure comprises 448 residues: GA-binding protein subunit beta-2 (448 aa).

ANK repeat units follow at residues 5 to 34 (DLGK…PFTT), 37 to 66 (LGTS…SRDA), 70 to 99 (VDRT…DVNA), 103 to 132 (LKMT…DVHA), and 136 to 166 (FDKS…QVNV). Residue serine 256 is modified to Phosphoserine. Disordered regions lie at residues 325–354 (EEEE…GNER) and 420–448 (ELEE…TVSS). Basic and acidic residues predominate over residues 337–354 (RIGEKTNSVEESKEGNER). The stretch at 345 to 395 (VEESKEGNERELLQQQLQEANRRAQEYRHQLLKKEQEAEQYRLKLEAIARQ) forms a coiled coil. A compositionally biased stretch (polar residues) spans 428–448 (VTGSAGTTEPHTRVSMATVSS).

In terms of assembly, heterotetramer of two alpha and two beta subunits. The C-terminal is necessary for the formation of a heterotetrameric GABP-alpha-2/beta-2 complex, and also facilitates homotypic dimerization. Interacts with ADGRB2.

The protein resides in the nucleus. In terms of biological role, may function as transcription factor capable of interacting with purine rich repeats (GA repeats). The sequence is that of GA-binding protein subunit beta-2 (GABPB2) from Homo sapiens (Human).